The chain runs to 93 residues: C-C motif chemokine 3 (93 aa).

The first 24 residues, 1–24 (MKVAVAALAVLLCAMALCSQVFSA), serve as a signal peptide directing secretion. 2 disulfides stabilise this stretch: Cys-34–Cys-58 and Cys-35–Cys-74.

Belongs to the intercrine beta (chemokine CC) family. As to quaternary structure, self-associates. Also heterodimer of MIP-1-alpha(4-69) and MIP-1-beta(3-69). Interacts with CCR1.

The protein resides in the secreted. Monokine with inflammatory and chemokinetic properties. Binds to CCR1, CCR4 and CCR5. One of the major HIV-suppressive factors produced by CD8+ T-cells. Recombinant MIP-1-alpha induces a dose-dependent inhibition of different strains of HIV-1, HIV-2, and simian immunodeficiency virus (SIV). The sequence is that of C-C motif chemokine 3 (CCL3) from Bos taurus (Bovine).